Here is a 367-residue protein sequence, read N- to C-terminus: Centrosomal protein of 41 kDa (367 aa).

Residues 89-121 (HKLEGGNSPASDADAELTAGTNGKGSPNGTPPS) are disordered. The segment covering 107–116 (AGTNGKGSPN) has biased composition (polar residues). In terms of domain architecture, Rhodanese spans 169 to 266 (PDCPFLLLDV…LAQKVPEGLI (98 aa)). The interval 319–367 (LPSDTASRLSRGSSGRDSKATTARSSPSLPSTAGSRMLSRSSIQNRPWK) is disordered. The span at 338–367 (ATTARSSPSLPSTAGSRMLSRSSIQNRPWK) shows a compositional bias: polar residues.

It belongs to the CEP41 family.

The protein localises to the cytoplasm. Its subcellular location is the cytoskeleton. The protein resides in the microtubule organizing center. It is found in the centrosome. It localises to the cell projection. The protein localises to the cilium. Its subcellular location is the cilium basal body. In terms of biological role, required during ciliogenesis for tubulin glutamylation in cilium. Probably acts by participating in the transport of tubulin polyglutamylases between the basal body and the cilium. The protein is Centrosomal protein of 41 kDa (CEP41) of Gallus gallus (Chicken).